The sequence spans 160 residues: Flavodoxin (160 aa).

One can recognise a Flavodoxin-like domain in the interval 3-153; it reads ISILYSSKTG…NARIFGERIA (151 aa).

It belongs to the flavodoxin family. The cofactor is FMN.

Low-potential electron donor to a number of redox enzymes. The polypeptide is Flavodoxin (floX) (Clostridium saccharobutylicum).